The chain runs to 660 residues: ATPase-like fidgetin (660 aa).

2 disordered regions span residues 141–186 (KQIY…EDPF) and 209–334 (ALSS…ADSK). Residues 145–161 (SKHSPPSTSTSSIVSSS) are compositionally biased toward low complexity. Ser-177 is modified (phosphoserine). A compositionally biased stretch (polar residues) spans 213–239 (DTGRSATMNSTTFPTAMKSQSTTKPTL). Residues 240-255 (SNSVSSPSIQVSNNQN) show a composition bias toward low complexity. The span at 301–313 (LNSSHDTLGSSTR) shows a compositional bias: polar residues. Positions 314-333 (PSSADTAGSPATSPPATADS) are enriched in low complexity. ATP is bound at residue 419-426 (GPPGTGKT).

It belongs to the AAA ATPase family.

It is found in the nucleus. This Schizosaccharomyces pombe (strain 972 / ATCC 24843) (Fission yeast) protein is ATPase-like fidgetin (alf1).